The following is a 595-amino-acid chain: Aspartate--tRNA(Asp/Asn) ligase (595 aa).

E178 lines the L-aspartate pocket. Positions 202 to 205 (QIFK) are aspartate. R224 serves as a coordination point for L-aspartate. Residues 224–226 (RDE) and Q233 each bind ATP. Position 458 (H458) interacts with L-aspartate. E488 serves as a coordination point for ATP. Residue R495 participates in L-aspartate binding. Position 540-543 (540-543 (GIDR)) interacts with ATP.

It belongs to the class-II aminoacyl-tRNA synthetase family. Type 1 subfamily. As to quaternary structure, homodimer.

It is found in the cytoplasm. The catalysed reaction is tRNA(Asx) + L-aspartate + ATP = L-aspartyl-tRNA(Asx) + AMP + diphosphate. Functionally, aspartyl-tRNA synthetase with relaxed tRNA specificity since it is able to aspartylate not only its cognate tRNA(Asp) but also tRNA(Asn). Reaction proceeds in two steps: L-aspartate is first activated by ATP to form Asp-AMP and then transferred to the acceptor end of tRNA(Asp/Asn). In Acaryochloris marina (strain MBIC 11017), this protein is Aspartate--tRNA(Asp/Asn) ligase.